Here is a 156-residue protein sequence, read N- to C-terminus: Inner membrane protein YlaC (156 aa).

The Cytoplasmic portion of the chain corresponds to Met-1–His-35. A helical transmembrane segment spans residues Pro-36–Ser-56. The Periplasmic portion of the chain corresponds to Glu-57 to Thr-58. Residues Leu-59–Phe-79 traverse the membrane as a helical segment. Over Asp-80 to Ser-156 the chain is Cytoplasmic.

Its subcellular location is the cell inner membrane. The protein is Inner membrane protein YlaC (ylaC) of Escherichia coli (strain K12).